Here is a 217-residue protein sequence, read N- to C-terminus: Adenylate kinase (217 aa).

Gly-10–Thr-15 provides a ligand contact to ATP. Residues Ser-30–Val-59 are NMP. AMP-binding positions include Thr-31, Arg-36, Glu-57 to Val-59, Gly-85 to Arg-88, and Gln-92. The tract at residues Gly-126–Asp-164 is LID. Residue Arg-127 coordinates ATP. Residues Cys-130 and Cys-133 each contribute to the Zn(2+) site. Residue Ile-136–Tyr-137 participates in ATP binding. 2 residues coordinate Zn(2+): Cys-150 and Cys-153. AMP contacts are provided by Arg-161 and Arg-172. An ATP-binding site is contributed by Asp-200.

Belongs to the adenylate kinase family. In terms of assembly, monomer.

The protein localises to the cytoplasm. It carries out the reaction AMP + ATP = 2 ADP. It participates in purine metabolism; AMP biosynthesis via salvage pathway; AMP from ADP: step 1/1. Catalyzes the reversible transfer of the terminal phosphate group between ATP and AMP. Plays an important role in cellular energy homeostasis and in adenine nucleotide metabolism. The polypeptide is Adenylate kinase (Nitrosococcus oceani (strain ATCC 19707 / BCRC 17464 / JCM 30415 / NCIMB 11848 / C-107)).